The sequence spans 473 residues: ATP synthase subunit beta, chloroplastic (473 aa).

Residue 172–179 (GGAGVGKT) participates in ATP binding.

This sequence belongs to the ATPase alpha/beta chains family. In terms of assembly, F-type ATPases have 2 components, CF(1) - the catalytic core - and CF(0) - the membrane proton channel. CF(1) has five subunits: alpha(3), beta(3), gamma(1), delta(1), epsilon(1). CF(0) has four main subunits: a(1), b(1), b'(1) and c(9-12).

Its subcellular location is the plastid. The protein resides in the chloroplast thylakoid membrane. The enzyme catalyses ATP + H2O + 4 H(+)(in) = ADP + phosphate + 5 H(+)(out). Its function is as follows. Produces ATP from ADP in the presence of a proton gradient across the membrane. The catalytic sites are hosted primarily by the beta subunits. This Equisetum arvense (Field horsetail) protein is ATP synthase subunit beta, chloroplastic.